We begin with the raw amino-acid sequence, 130 residues long: MAYAIIETGGKQVRVEPGRFYDIELLSAEPDEKVTIESVLLVQNDGEVTIGQPLVAGATVQGTVLRHLRGRKVLVYKMKPKKKTRKKRGHRQEITRLLIDSITFNGTVLTAPTASAETADATPDTETAAE.

It belongs to the bacterial ribosomal protein bL21 family. In terms of assembly, part of the 50S ribosomal subunit. Contacts protein L20.

Functionally, this protein binds to 23S rRNA in the presence of protein L20. The sequence is that of Large ribosomal subunit protein bL21 from Trichormus variabilis (strain ATCC 29413 / PCC 7937) (Anabaena variabilis).